The following is a 606-amino-acid chain: Pentatricopeptide repeat-containing protein At1g31920 (606 aa).

9 PPR repeats span residues 96-130 (CTFD…GNEP), 131-165 (DNFT…GLEA), 166-200 (DVFV…TAAS), 201-227 (WSSM…MCSE), 233-263 (EESG…LLRN), 268-298 (NIIV…MEKR), 299-333 (NNLT…GLEP), 334-368 (DHVV…GKVE), and 370-404 (TAEH…KNDV). The segment at 405–480 (IWRTFLSQCR…TPGFSIVELK (76 aa)) is type E motif. The type E(+) motif stretch occupies residues 481–511 (GKTHRFVSQDRSHPKCKEIYKMLHQMEWQLK). Residues 512-606 (FEGYSPDLTQ…GGTCSCKDYW (95 aa)) form a type DYW motif region.

The protein belongs to the PPR family. PCMP-H subfamily.

This Arabidopsis thaliana (Mouse-ear cress) protein is Pentatricopeptide repeat-containing protein At1g31920 (PCMP-H11).